The following is an 880-amino-acid chain: MTIEHYNLGERYNPRACERKWQAIWDEKKTFQTVQEDRREKYYVLEMFPYPSGRIHMGHVRNYAMGDVVARYKRAKGFNVLHPMGWDAFGMPAENAAMQNKVHPKTWTYQNIAVMRGQLKQLGLSVDWSREFATCDVDYYHRQQMLFLDFYQKGLVARKVAKVNWDPVDQTVLANEQVVDGRGWRSGALVEQRELTQWFFKISDFSEDLLAGLEELEQWPEKVRIMQKNWIGKSQGLLIRWALKSTEEADEVCKSFDEVVCYSTRPDTLFGASFLALSVDHPLAQALAQKDKALEFFIENCRSGGTTTAELETAEKQGFRTSLVAVHPFDVAVHIPVYIANFVLMDYGTGAVFGCPAHDQRDFDFARKYDLPVQPVVLPSGVEREDFAITETPYLGDGVMINSSFLDGLTPQQAFEEAAKRLEGQMLNGKPQAEKTVQFRLRDWGISRQRYWGCPIPMIHCTSCGVVPVPRADLPVVLPDDVTFEQPGNPLVCHETWKSVACPVCGQFAKRETDTMDTFVDSSWYYARFTAPFAQEPVDKKATTEWLPVQQYIGGIEHAILHLLYARFFTRAMKSMGYVTVDEPFKGLFTQGMVVHETYRDEKDWVSPEEISIVEKDGKRQAYKLTDQSEVTIGSIEKMSKSKKNVVDPDDIIASYGADTVRWFILSDSPPERDVIWTESGVEGAHRFVQRVWRCVALSAPVLRDVVPCVGKQGAALQLSKVAHRTLYAVEDDLEKFAFNRAIARLYEFLNIMAPLLNRIENVEDEMKAALRQAMDFFLAMIAPIMPHLAEECHAALGEKTLISELAWPVCDRALTVEECYTLPVQINGKKRGEVTVAATASEAMIEEAVLALDFVKVHLVKKPVKKMIIVPKRIVNVVL.

The 'HIGH' region motif lies at 49–59 (PYPSGRIHMGH). The 'KMSKS' region signature appears at 638–642 (KMSKS). An ATP-binding site is contributed by K641.

The protein belongs to the class-I aminoacyl-tRNA synthetase family.

It is found in the cytoplasm. The catalysed reaction is tRNA(Leu) + L-leucine + ATP = L-leucyl-tRNA(Leu) + AMP + diphosphate. The chain is Leucine--tRNA ligase from Bartonella henselae (strain ATCC 49882 / DSM 28221 / CCUG 30454 / Houston 1) (Rochalimaea henselae).